The chain runs to 334 residues: Sensor protein BceS (334 aa).

2 consecutive transmembrane segments (helical) span residues 13 to 33 (ILII…DSAI) and 35 to 55 (LAPV…FLAV). In terms of domain architecture, Histidine kinase spans 121–326 (AWIHEIKTPL…TFTLTFPKEN (206 aa)). His-124 is modified (phosphohistidine; by autocatalysis).

It localises to the cell membrane. It carries out the reaction ATP + protein L-histidine = ADP + protein N-phospho-L-histidine.. In terms of biological role, member of the two-component regulatory system BceS/BceR involved in the regulation of bacitracin resistance. Activates BceR in response to extracellular bacitracin. The protein is Sensor protein BceS (bceS) of Halalkalibacterium halodurans (strain ATCC BAA-125 / DSM 18197 / FERM 7344 / JCM 9153 / C-125) (Bacillus halodurans).